A 210-amino-acid polypeptide reads, in one-letter code: Translation initiation factor IF-3 (210 aa).

The disordered stretch occupies residues 169 to 210 (APKQAPAPKKERTEESAEKAGSAGETEPVPAASAAAEAPANV). Basic and acidic residues predominate over residues 176–186 (PKKERTEESAE). Positions 187–210 (KAGSAGETEPVPAASAAAEAPANV) are enriched in low complexity.

This sequence belongs to the IF-3 family. Monomer.

The protein resides in the cytoplasm. Its function is as follows. IF-3 binds to the 30S ribosomal subunit and shifts the equilibrium between 70S ribosomes and their 50S and 30S subunits in favor of the free subunits, thus enhancing the availability of 30S subunits on which protein synthesis initiation begins. In Deinococcus deserti (strain DSM 17065 / CIP 109153 / LMG 22923 / VCD115), this protein is Translation initiation factor IF-3.